The chain runs to 79 residues: Small ribosomal subunit protein bS18 (79 aa).

This sequence belongs to the bacterial ribosomal protein bS18 family. Part of the 30S ribosomal subunit. Forms a tight heterodimer with protein bS6.

Binds as a heterodimer with protein bS6 to the central domain of the 16S rRNA, where it helps stabilize the platform of the 30S subunit. In Blochmanniella pennsylvanica (strain BPEN), this protein is Small ribosomal subunit protein bS18.